The primary structure comprises 517 residues: Glycerol kinase 5 (517 aa).

The ATP site is built by Ser-23 and Thr-24. The glycerol site is built by Arg-93, Asp-270, and Gln-271. Thr-292, Gly-335, and Gly-432 together coordinate ATP.

It belongs to the FGGY kinase family.

The protein localises to the cytoplasm. The catalysed reaction is glycerol + ATP = sn-glycerol 3-phosphate + ADP + H(+). It functions in the pathway polyol metabolism; glycerol degradation via glycerol kinase pathway; sn-glycerol 3-phosphate from glycerol: step 1/1. Its function is as follows. Skin-specific kinase that plays a key role in glycerol metabolism, catalyzing its phosphorylation to produce sn-glycerol 3-phosphate. Involved in skin-specific regulation of sterol regulatory element-binding protein (SREBP) processing and lipid biosynthesis. This is Glycerol kinase 5 (GK5) from Gallus gallus (Chicken).